The chain runs to 491 residues: Nicotinamide phosphoribosyltransferase (491 aa).

An N-acetylmethionine modification is found at methionine 1. Position 188 is a phosphotyrosine (tyrosine 188). Arginine 196 lines the diphosphate pocket. Residue aspartate 219 participates in beta-nicotinamide D-ribonucleotide binding. Positions 247 and 311 each coordinate diphosphate. Beta-nicotinamide D-ribonucleotide is bound by residues 311 to 313 (RPD), 353 to 354 (GD), glycine 384, and arginine 392. Serine 472 is subject to Phosphoserine.

This sequence belongs to the NAPRTase family. In terms of assembly, homodimer. Ubiquitously expressed in lymphoid and non-lymphoid tissues.

It is found in the nucleus. The protein resides in the cytoplasm. Its subcellular location is the secreted. The enzyme catalyses beta-nicotinamide D-ribonucleotide + diphosphate = 5-phospho-alpha-D-ribose 1-diphosphate + nicotinamide + H(+). It participates in cofactor biosynthesis; NAD(+) biosynthesis; nicotinamide D-ribonucleotide from 5-phospho-alpha-D-ribose 1-diphosphate and nicotinamide: step 1/1. In terms of biological role, the secreted form behaves both as a cytokine with immunomodulating properties and an adipokine with anti-diabetic properties, it has no enzymatic activity, partly because of lack of activation by ATP, which has a low level in extracellular space and plasma. Catalyzes the condensation of nicotinamide with 5-phosphoribosyl-1-pyrophosphate to yield nicotinamide mononucleotide, an intermediate in the biosynthesis of NAD. It is the rate limiting component in the mammalian NAD biosynthesis pathway. Plays a role in the modulation of circadian clock function. NAMPT-dependent oscillatory production of NAD regulates oscillation of clock target gene expression by releasing the core clock component: CLOCK-BMAL1 heterodimer from NAD-dependent SIRT1-mediated suppression. The polypeptide is Nicotinamide phosphoribosyltransferase (Nampt) (Mus musculus (Mouse)).